The following is a 469-amino-acid chain: MTRPVRTRFAPSPTGFIHLGNIRSALYPWAFARKMKGTFVLRIEDTDLERSTEASVDAILEGMAWLGLDYDEGPYYQMQRMDRYREVLAQMLEKDLVYPCYMSTEELDALRERQRAAGEKPRYDGTWRPEPGKVLPEPPAGVTPVLRFRNPLTGSVVWDDAVKGRVEISNEELDDLVIARPDGTPTYNFCVVVDDLDMGITHVIRGDDHVNNTPRQINILRALGGEVPVYAHLPTVLNEQGEKMSKRHGAMSVMGYRDAGYLPEAVLNYLARLGWSHGDAEIFSREQFVEWFDLEHLGKSPAQYDHNKLNWLNNHYIKEADDARLAELAKPFFAALGIDADAIARGPDLVGVMGLMKDRASTVKEIAENSTMFYRAPAPDAQALAQHVTDAVRPALAEFAAALKTAEWTKEAIAAALKAVLGAHKLKMPQLAMPVRLLVAGTTHTPSIDAVLLLFGRDVVVSRLAAALA.

The 'HIGH' region signature appears at 11 to 21 (PSPTGFIHLGN). The span at 118–131 (GEKPRYDGTWRPEP) shows a compositional bias: basic and acidic residues. Positions 118–139 (GEKPRYDGTWRPEPGKVLPEPP) are disordered. The short motif at 243 to 247 (KMSKR) is the 'KMSKS' region element. ATP is bound at residue Lys246.

This sequence belongs to the class-I aminoacyl-tRNA synthetase family. Glutamate--tRNA ligase type 1 subfamily. As to quaternary structure, monomer.

The protein resides in the cytoplasm. It catalyses the reaction tRNA(Glu) + L-glutamate + ATP = L-glutamyl-tRNA(Glu) + AMP + diphosphate. Catalyzes the attachment of glutamate to tRNA(Glu) in a two-step reaction: glutamate is first activated by ATP to form Glu-AMP and then transferred to the acceptor end of tRNA(Glu). The chain is Glutamate--tRNA ligase from Burkholderia pseudomallei (strain 668).